The primary structure comprises 173 residues: Crossover junction endodeoxyribonuclease RuvC (173 aa).

Active-site residues include Asp8, Glu69, and Asp141. 3 residues coordinate Mg(2+): Asp8, Glu69, and Asp141.

Belongs to the RuvC family. As to quaternary structure, homodimer which binds Holliday junction (HJ) DNA. The HJ becomes 2-fold symmetrical on binding to RuvC with unstacked arms; it has a different conformation from HJ DNA in complex with RuvA. In the full resolvosome a probable DNA-RuvA(4)-RuvB(12)-RuvC(2) complex forms which resolves the HJ. Mg(2+) is required as a cofactor.

The protein resides in the cytoplasm. It carries out the reaction Endonucleolytic cleavage at a junction such as a reciprocal single-stranded crossover between two homologous DNA duplexes (Holliday junction).. The RuvA-RuvB-RuvC complex processes Holliday junction (HJ) DNA during genetic recombination and DNA repair. Endonuclease that resolves HJ intermediates. Cleaves cruciform DNA by making single-stranded nicks across the HJ at symmetrical positions within the homologous arms, yielding a 5'-phosphate and a 3'-hydroxyl group; requires a central core of homology in the junction. The consensus cleavage sequence is 5'-(A/T)TT(C/G)-3'. Cleavage occurs on the 3'-side of the TT dinucleotide at the point of strand exchange. HJ branch migration catalyzed by RuvA-RuvB allows RuvC to scan DNA until it finds its consensus sequence, where it cleaves and resolves the cruciform DNA. This is Crossover junction endodeoxyribonuclease RuvC from Xylella fastidiosa (strain Temecula1 / ATCC 700964).